Consider the following 230-residue polypeptide: Eukaryotic translation initiation factor 4E-1 (230 aa).

The segment at 1-53 (MVVEDSQKSTITDEQNPSRVDNDDDDLEDGEILEDADDAASAASKPPSAFLRN) is disordered. Over residues 8–19 (KSTITDEQNPSR) the composition is skewed to polar residues. Residues 22-38 (NDDDDLEDGEILEDADD) are compositionally biased toward acidic residues. Positions 39 to 49 (AASAASKPPSA) are enriched in low complexity. EIF4G-binding regions lie at residues 55–58 (HPLE) and 65–101 (FDNPSAKSKQAAWGSSIRPIYTFSTVEEFWSIYNNIH). Residues 73 to 78 (KQAAWG), Lys105, and 123 to 124 (WE) contribute to the mRNA site. A disulfide bridge connects residues Cys128 and Cys166. An EIF4G-binding region spans residues 149–158 (YTLLAMIGEQ). Residues 173 to 178 (RNRQDK) and 218 to 222 (KKHER) contribute to the mRNA site.

It belongs to the eukaryotic initiation factor 4E family. As to quaternary structure, EIF4F is a multi-subunit complex, the composition of which varies with external and internal environmental conditions. It is composed of at least EIF4A, EIF4E and EIF4G. EIF4E is also known to interact with other partners. In higher plants two isoforms of EIF4F have been identified, named isoform EIF4F and isoform EIF(iso)4F. Isoform EIF4F has subunits p220 and p26, whereas isoform EIF(iso)4F has subunits p82 and p28. In terms of assembly, (Microbial infection) Interacts with potyvirus viral genome-linked protein (VPg); this interaction is possible in susceptible hosts but impaired in resistant plants. Post-translationally, according to the redox status, the Cys-128-Cys-166 disulfide bridge may have a role in regulating protein function by affecting its ability to bind capped mRNA.

It localises to the nucleus. Its subcellular location is the cytoplasm. Functionally, component of the protein complex eIF4F, which is involved in the recognition of the mRNA cap, ATP-dependent unwinding of 5'-terminal secondary structure and recruitment of mRNA to the ribosome. Recognizes and binds the 7-methylguanosine-containing mRNA cap during an early step in the initiation of protein synthesis and facilitates ribosome binding by inducing the unwinding of the mRNAs secondary structures. Key component of recessive resistance to potyviruses. Its function is as follows. (Microbial infection) Susceptibility host factor required for viral infection by recruiting viral RNAs to the host ribosomal complex via an interaction with viral genome-linked protein (VPg). This chain is Eukaryotic translation initiation factor 4E-1, found in Phaseolus vulgaris (Kidney bean).